We begin with the raw amino-acid sequence, 499 residues long: Probable cytosol aminopeptidase (499 aa).

2 residues coordinate Mn(2+): Lys263 and Asp268. The active site involves Lys275. Mn(2+) is bound by residues Asp286, Asp345, and Glu347. Residue Arg349 is part of the active site.

This sequence belongs to the peptidase M17 family. Mn(2+) serves as cofactor.

Its subcellular location is the cytoplasm. It catalyses the reaction Release of an N-terminal amino acid, Xaa-|-Yaa-, in which Xaa is preferably Leu, but may be other amino acids including Pro although not Arg or Lys, and Yaa may be Pro. Amino acid amides and methyl esters are also readily hydrolyzed, but rates on arylamides are exceedingly low.. It carries out the reaction Release of an N-terminal amino acid, preferentially leucine, but not glutamic or aspartic acids.. Its function is as follows. Presumably involved in the processing and regular turnover of intracellular proteins. Catalyzes the removal of unsubstituted N-terminal amino acids from various peptides. In Chlamydia trachomatis serovar A (strain ATCC VR-571B / DSM 19440 / HAR-13), this protein is Probable cytosol aminopeptidase.